A 372-amino-acid chain; its full sequence is Glutamate 5-kinase (372 aa).

Lysine 14 is an ATP binding site. Substrate contacts are provided by serine 54, aspartate 141, and asparagine 153. 173 to 174 (TD) is a binding site for ATP. In terms of domain architecture, PUA spans 280 to 358 (RGHVVIDAGA…GEIEIVLGYM (79 aa)).

It belongs to the glutamate 5-kinase family.

It localises to the cytoplasm. It carries out the reaction L-glutamate + ATP = L-glutamyl 5-phosphate + ADP. It functions in the pathway amino-acid biosynthesis; L-proline biosynthesis; L-glutamate 5-semialdehyde from L-glutamate: step 1/2. Catalyzes the transfer of a phosphate group to glutamate to form L-glutamate 5-phosphate. The chain is Glutamate 5-kinase from Burkholderia orbicola (strain MC0-3).